The chain runs to 445 residues: Inward rectifier potassium channel 4 (445 aa).

Residues 1-55 (MHGHNRNGQAHVPRRKRRNRFVKKNGQCNVYFANLSNKSQRYMADIFTTCVDTRW) are Cytoplasmic-facing. The chain crosses the membrane as a helical span at residues 56–80 (RYMLMIFSAAFLVSWLFFGLLFWWI). At 81–119 (AFFHGDLEASPSVPAVGGPGGNGGESPNAPKPCIMHVNG) the chain is on the extracellular side. Residues 120-131 (FLGAFLFSVETQ) constitute an intramembrane region (helical; Pore-forming). Positions 132 to 138 (TTIGYGF) form an intramembrane region, pore-forming. The short motif at 133–138 (TIGYGF) is the Selectivity filter element. Topologically, residues 139 to 147 (RCVTEECPL) are extracellular. The helical transmembrane segment at 148-169 (AVIAVVVQSIVGCVIDSFMIGT) threads the bilayer. Topologically, residues 170-445 (IMAKMARPKK…NISYRRESRI (276 aa)) are cytoplasmic. Positions 443-445 (SRI) match the PDZ-binding motif.

Belongs to the inward rectifier-type potassium channel (TC 1.A.2.1) family. KCNJ4 subfamily. As to quaternary structure, homomultimeric and heteromultimeric association with KCNJ2 and KCNJ12. Interacts with DLG2 and DLG4. Associates, via its PDZ-recognition domain, with a complex containing LIN7A, LIN7B, LIN7C, DLG1, CASK and APBA1. Interacts with TAX1BP3. TAX1BP3 competes with LIN7 family members for KCNJ4 binding. As to expression, highly expressed in the forebrain, moderately in skeletal muscle. Im olfactory bulb, specifically expressed at the postsynaptic membrane of dendritic spines of granule cells.

It localises to the cell membrane. The protein resides in the postsynaptic cell membrane. It is found in the cytoplasmic vesicle membrane. It catalyses the reaction K(+)(in) = K(+)(out). In terms of biological role, inward rectifier potassium channels are characterized by a greater tendency to allow potassium to flow into the cell rather than out of it. Their voltage dependence is regulated by the concentration of extracellular potassium; as external potassium is raised, the voltage range of the channel opening shifts to more positive voltages. The inward rectification is mainly due to the blockage of outward current by internal magnesium. Can be blocked by extracellular barium and cesium. In Mus musculus (Mouse), this protein is Inward rectifier potassium channel 4 (Kcnj4).